We begin with the raw amino-acid sequence, 444 residues long: Tol-Pal system protein TolB (444 aa).

The N-terminal stretch at 1 to 18 (MRNIIYFILLLFSCTGYA) is a signal peptide.

Belongs to the TolB family. As to quaternary structure, the Tol-Pal system is composed of five core proteins: the inner membrane proteins TolA, TolQ and TolR, the periplasmic protein TolB and the outer membrane protein Pal. They form a network linking the inner and outer membranes and the peptidoglycan layer.

Its subcellular location is the periplasm. Part of the Tol-Pal system, which plays a role in outer membrane invagination during cell division and is important for maintaining outer membrane integrity. This chain is Tol-Pal system protein TolB, found in Rickettsia canadensis (strain McKiel).